The chain runs to 218 residues: MLFISATNTNAGKTTCARLLAQYCNACGVKTILLKPIETGVNDAINHSSDAHLFLQDNRLLDRSLTLKDISFYRYHKVSAPLIAQQEEDPNAPIDTDNLTQRLHNFTKTYDLVIVEGAGGLCVPITLEENMLDFALKLKAKMLLISHDNLGLINDCLLNDFLLKSHQLDYKIAINLKGNNTAFHSISLPYIELFNTRSNNPIVIFQQSLKVLMSFALK.

9–15 (TNAGKTT) provides a ligand contact to ATP. Threonine 14 contacts Mg(2+). Lysine 35 is a catalytic residue. Phosphate is bound at residue lysine 35. Threonine 39 is a substrate binding site. ATP contacts are provided by residues aspartate 50, glutamate 116, and 116–119 (EGAG). Residues aspartate 50 and glutamate 116 each contribute to the Mg(2+) site. 116–119 (EGAG) is a phosphate binding site. 151–154 (GLIN) is a substrate binding site. ATP is bound by residues asparagine 175 and 175–177 (NLK).

It belongs to the dethiobiotin synthetase family. In terms of assembly, homodimer. The cofactor is Mg(2+).

The protein localises to the cytoplasm. The enzyme catalyses (7R,8S)-7,8-diammoniononanoate + CO2 + ATP = (4R,5S)-dethiobiotin + ADP + phosphate + 3 H(+). Its pathway is cofactor biosynthesis; biotin biosynthesis; biotin from 7,8-diaminononanoate: step 1/2. Catalyzes a mechanistically unusual reaction, the ATP-dependent insertion of CO2 between the N7 and N8 nitrogen atoms of 7,8-diaminopelargonic acid (DAPA, also called 7,8-diammoniononanoate) to form a ureido ring. The protein is ATP-dependent dethiobiotin synthetase BioD of Helicobacter pylori (strain ATCC 700392 / 26695) (Campylobacter pylori).